The primary structure comprises 607 residues: Frizzled and smoothened-like protein J (607 aa).

Positions Met1–Ser26 are cleaved as a signal peptide. Topologically, residues Gln27–Asp247 are extracellular. In terms of domain architecture, FZ spans Asp32–Thr182. 3 disulfide bridges follow: Cys37/Cys108, Cys50/Cys101, and Cys127/Cys179. N-linked (GlcNAc...) asparagine glycosylation is found at Asn63, Asn133, Asn155, Asn164, Asn190, and Asn222. The chain crosses the membrane as a helical span at residues Val248–Asn268. The Cytoplasmic segment spans residues Pro269 to Lys276. Residues Ile277–Phe297 form a helical membrane-spanning segment. Asn298 is a glycosylation site (N-linked (GlcNAc...) asparagine). The Extracellular portion of the chain corresponds to Asn298–Ser330. The chain crosses the membrane as a helical span at residues Leu331–Val351. Residues Gly352–Arg358 are Cytoplasmic-facing. The helical transmembrane segment at Phe359 to Ser379 threads the bilayer. Residues Lys380–Arg401 are Extracellular-facing. Residues Phe402–Leu422 traverse the membrane as a helical segment. Topologically, residues Met423–Pro451 are cytoplasmic. The helical transmembrane segment at Ile452–Ile472 threads the bilayer. The Extracellular portion of the chain corresponds to Asn473 to Gly508. Residues Leu509–Ile529 traverse the membrane as a helical segment. Over Ser530–Leu607 the chain is Cytoplasmic. Residues Lys532–Trp537 carry the Lys-Thr-X-X-X-Trp motif, mediates interaction with the PDZ domain of Dvl family members motif. Low complexity predominate over residues Thr559–Ser575. The tract at residues Thr559–Leu607 is disordered. The span at Gly593–Leu607 shows a compositional bias: polar residues.

The protein belongs to the G-protein coupled receptor Fz/Smo family.

Its subcellular location is the membrane. The protein is Frizzled and smoothened-like protein J (fslJ-1) of Dictyostelium discoideum (Social amoeba).